Reading from the N-terminus, the 276-residue chain is Adenylate kinase (276 aa).

Position 38–43 (38–43) interacts with ATP; the sequence is GSGKGT. The NMP stretch occupies residues 58–87; the sequence is STGDMLRAAIEQGTETGKQAKTIMDQGGLV. AMP-binding positions include T59, R64, 85–87, 113–116, and Q120; these read GLV and GFPR. Residues 154–191 are LID; sequence GRLVHPSSGRSYHREFFPPKVDMIDDITGEPLIQRSDD. ATP-binding positions include R155 and 164 to 165; that span reads SY. Positions 188 and 199 each coordinate AMP. K227 is an ATP binding site.

Belongs to the adenylate kinase family. AK2 subfamily. In terms of assembly, monomer.

It localises to the cytoplasm. Its subcellular location is the cytosol. The protein localises to the mitochondrion intermembrane space. It carries out the reaction AMP + ATP = 2 ADP. Its function is as follows. Catalyzes the reversible transfer of the terminal phosphate group between ATP and AMP. Plays an important role in cellular energy homeostasis and in adenine nucleotide metabolism. Adenylate kinase activity is critical for regulation of the phosphate utilization and the AMP de novo biosynthesis pathways. The protein is Adenylate kinase (adkA) of Dictyostelium discoideum (Social amoeba).